The following is a 151-amino-acid chain: UPF0178 protein CJA_1978 (151 aa).

The protein belongs to the UPF0178 family.

The chain is UPF0178 protein CJA_1978 from Cellvibrio japonicus (strain Ueda107) (Pseudomonas fluorescens subsp. cellulosa).